The following is a 421-amino-acid chain: Enolase 1 (421 aa).

Glutamine 164 is a binding site for (2R)-2-phosphoglycerate. Glutamate 206 (proton donor) is an active-site residue. The Mg(2+) site is built by aspartate 243, glutamate 287, and aspartate 314. 4 residues coordinate (2R)-2-phosphoglycerate: lysine 339, arginine 368, serine 369, and lysine 390. Catalysis depends on lysine 339, which acts as the Proton acceptor.

It belongs to the enolase family. In terms of assembly, component of the RNA degradosome, a multiprotein complex involved in RNA processing and mRNA degradation. Requires Mg(2+) as cofactor.

The protein resides in the cytoplasm. Its subcellular location is the secreted. It is found in the cell surface. The enzyme catalyses (2R)-2-phosphoglycerate = phosphoenolpyruvate + H2O. It participates in carbohydrate degradation; glycolysis; pyruvate from D-glyceraldehyde 3-phosphate: step 4/5. In terms of biological role, catalyzes the reversible conversion of 2-phosphoglycerate (2-PG) into phosphoenolpyruvate (PEP). It is essential for the degradation of carbohydrates via glycolysis. In Methylococcus capsulatus (strain ATCC 33009 / NCIMB 11132 / Bath), this protein is Enolase 1.